Here is a 69-residue protein sequence, read N- to C-terminus: uncharacterized protein (69 aa).

Over 1–15 (MLLYIVIIVACIISK) the chain is Cytoplasmic. The chain crosses the membrane as a helical span at residues 16 to 36 (LVPNEYWAIHLFFIIMIFMVY). Topologically, residues 37 to 69 (MYEKLDIHQKYQFWNYTMSGLSGHNVQVICKCY) are extracellular. N-linked (GlcNAc...) asparagine; by host glycosylation occurs at asparagine 51.

The protein belongs to the asfivirus X69R family.

Its subcellular location is the host membrane. This is an uncharacterized protein from Ornithodoros (relapsing fever ticks).